Consider the following 82-residue polypeptide: Small ribosomal subunit protein bS16 (82 aa).

It belongs to the bacterial ribosomal protein bS16 family.

This Mannheimia succiniciproducens (strain KCTC 0769BP / MBEL55E) protein is Small ribosomal subunit protein bS16.